We begin with the raw amino-acid sequence, 562 residues long: Calmodulin-binding protein 60 F (562 aa).

Residues 1–22 are disordered; sequence MENSMNNRGHGHNQEHADNLPE. The calmodulin-binding stretch occupies residues 5 to 84; it reads MNNRGHGHNQ…STSRSTEPNK (80 aa). Residues 12–22 are compositionally biased toward basic and acidic residues; sequence HNQEHADNLPE. Positions 154–273 are DNA-binding; it reads EDDKDWTREH…ALHKKLLKSN (120 aa).

It belongs to the plant ACBP60 protein family. In terms of assembly, interacts with calmodulin (CaM).

Its subcellular location is the nucleus. Transcription activator that binds DNA in a sequence-specific manner, likely 5'-GAAATTTTGG-3', to promote the expression of target genes. In Arabidopsis thaliana (Mouse-ear cress), this protein is Calmodulin-binding protein 60 F.